A 545-amino-acid chain; its full sequence is O-phosphoserine--tRNA(Cys) ligase (545 aa).

Residues 189 to 191 (HMT), 234 to 236 (SAS), 276 to 277 (YY), and asparagine 328 contribute to the substrate site.

This sequence belongs to the class-II aminoacyl-tRNA synthetase family. O-phosphoseryl-tRNA(Cys) synthetase subfamily. In terms of assembly, homotetramer. Interacts with SepCysS.

It catalyses the reaction tRNA(Cys) + O-phospho-L-serine + ATP = O-phospho-L-seryl-tRNA(Cys) + AMP + diphosphate. Catalyzes the attachment of O-phosphoserine (Sep) to tRNA(Cys). This Methanothrix thermoacetophila (strain DSM 6194 / JCM 14653 / NBRC 101360 / PT) (Methanosaeta thermophila) protein is O-phosphoserine--tRNA(Cys) ligase.